The primary structure comprises 86 residues: Omega-theraphotoxin-Hhn1e (86 aa).

An N-terminal signal peptide occupies residues 1–21 (MKSIVFVALFGLALLAVVCSA). Positions 22 to 50 (SEGAHKELLKEVVRAMVVDKTDAVQAEER) are excised as a propeptide. Intrachain disulfides connect cysteine 52–cysteine 66 and cysteine 65–cysteine 78.

This sequence belongs to the neurotoxin 10 (Hwtx-1) family. 17 (Hntx-9) subfamily. As to expression, expressed by the venom gland.

It is found in the secreted. In terms of biological role, ion channel inhibitor. The sequence is that of Omega-theraphotoxin-Hhn1e from Cyriopagopus hainanus (Chinese bird spider).